The primary structure comprises 161 residues: Nucleotide-binding protein RSc2549 (161 aa).

The protein belongs to the YajQ family.

Functionally, nucleotide-binding protein. This chain is Nucleotide-binding protein RSc2549, found in Ralstonia nicotianae (strain ATCC BAA-1114 / GMI1000) (Ralstonia solanacearum).